The primary structure comprises 184 residues: Putative axial regulator YABBY 2 (184 aa).

A C4-type zinc finger spans residues 15–42; the sequence is CSFCTTILAVSVPYASLFTLVTVRCGHC. 2 stretches are compositionally biased toward polar residues: residues 76–94 and 171–184; these read LVTR…NLSE and LDQS…NGYY. Disordered stretches follow at residues 76 to 115 and 162 to 184; these read LVTR…RQRV and LDGN…NGYY.

This sequence belongs to the YABBY family. Interacts with SPL/NZZ and SPEAR2. In terms of tissue distribution, expressed at low levels in abaxial regions of lateral aerial organ primordia leading to cotyledons, leaves, flower meristems, sepals, petals, stamen and carpels, but not in roots.

Its subcellular location is the nucleus. Functionally, involved in the abaxial cell fate determination during embryogenesis and organogenesis. This Arabidopsis thaliana (Mouse-ear cress) protein is Putative axial regulator YABBY 2 (YAB2).